Consider the following 418-residue polypeptide: uncharacterized protein (418 aa).

The N-acetyltransferase domain maps to 7–158 (IDVRPIAEAE…TGLDPRWSGP (152 aa)). Residues 87–89 (VTV) and 95–100 (RRGLLT) each bind acetyl-CoA. Tyr128 serves as the catalytic Proton donor. The active-site Proton acceptor; via carboxylate is Phe418.

This sequence belongs to the acetyltransferase Eis family. Homohexamer; trimer of dimers.

This is an uncharacterized protein from Streptomyces avermitilis (strain ATCC 31267 / DSM 46492 / JCM 5070 / NBRC 14893 / NCIMB 12804 / NRRL 8165 / MA-4680).